A 307-amino-acid chain; its full sequence is Dof zinc finger protein DOF5.4 (307 aa).

The Dof-type zinc finger occupies 51–105; that stretch reads LKCPRCNSLNTKFCYYNNYNLSQPRHFCKNCRRYWTKGGVLRNVPVGGGCRKAKR. Zn(2+)-binding residues include C53, C56, C78, and C81. The disordered stretch occupies residues 96–147; that stretch reads VGGGCRKAKRSKTKQVPSSSSADKPTTTQDDHHVEEKSSTGSHSSSESSSLT. The segment covering 109–123 has biased composition (polar residues); it reads KQVPSSSSADKPTTT. Positions 124-133 are enriched in basic and acidic residues; the sequence is QDDHHVEEKS. The span at 134 to 147 shows a compositional bias: low complexity; that stretch reads STGSHSSSESSSLT.

It localises to the nucleus. Functionally, transcription factor that binds specifically to a 5'-AA[AG]G-3' consensus core sequence. Enhances the DNA binding of OBF transcription factors to OCS elements. In Arabidopsis thaliana (Mouse-ear cress), this protein is Dof zinc finger protein DOF5.4 (DOF5.4).